A 312-amino-acid chain; its full sequence is Glyoxylate/hydroxypyruvate reductase A (312 aa).

R227 is a catalytic residue. H275 functions as the Proton donor in the catalytic mechanism.

This sequence belongs to the D-isomer specific 2-hydroxyacid dehydrogenase family. GhrA subfamily.

It localises to the cytoplasm. The catalysed reaction is glycolate + NADP(+) = glyoxylate + NADPH + H(+). It catalyses the reaction (R)-glycerate + NAD(+) = 3-hydroxypyruvate + NADH + H(+). The enzyme catalyses (R)-glycerate + NADP(+) = 3-hydroxypyruvate + NADPH + H(+). In terms of biological role, catalyzes the NADPH-dependent reduction of glyoxylate and hydroxypyruvate into glycolate and glycerate, respectively. The polypeptide is Glyoxylate/hydroxypyruvate reductase A (Shigella boydii serotype 18 (strain CDC 3083-94 / BS512)).